The chain runs to 270 residues: MKFLEKLKQAGNSHNSLLCVGLDPDPKLMPVGMTALEFNREIIAATAPFVCGYKINLAFYEALGKQGWEILSETCKLIPPELLSIADAKRGDIGNTSKAYARAVFDELGCDGVTASPYLGYDSLEPFIEYQDKGIFILCRTSNQGSADFQMLKTEYLGQKRFLYEVVADKSLQWNRYENIGLVVGATQQEELKKLRLSYPKMPFLIPGIGAQGGDLKATVENGTNQSGQLALICASRGILYARSGSEFAQGAAEAAKQMRDAINHYRKRF.

Lys89 functions as the Proton donor in the catalytic mechanism.

This sequence belongs to the OMP decarboxylase family. Type 2 subfamily.

It carries out the reaction orotidine 5'-phosphate + H(+) = UMP + CO2. The protein operates within pyrimidine metabolism; UMP biosynthesis via de novo pathway; UMP from orotate: step 2/2. This is Orotidine 5'-phosphate decarboxylase from Dehalococcoides mccartyi (strain ATCC BAA-2266 / KCTC 15142 / 195) (Dehalococcoides ethenogenes (strain 195)).